Reading from the N-terminus, the 410-residue chain is Beta-arrestin-1 (410 aa).

The interaction with SRC stretch occupies residues 1 to 163 (MGDKGTRVFK…LEEKIHKRNS (163 aa)). Residues 45–86 (PEYLKERRVYVTLTCAFRYGREDLDVLGLTFRKDLFVANVQS) are interaction with CHRM2. A Phosphotyrosine modification is found at Y47. 1D-myo-inositol hexakisphosphate is bound by residues K250, M255, K324, and K326. An interaction with TRAF6 region spans residues 318 to 410 (IVSYKVKVKL…GTGSPQLNNR (93 aa)). A [DE]-X(1,2)-F-X-X-[FL]-X-X-X-R motif motif is present at residues 385–395 (RQRLKGMKDDK). The segment at 389–410 (KGMKDDKEEEENGTGSPQLNNR) is disordered. Residues 401–410 (GTGSPQLNNR) are compositionally biased toward polar residues. S404 is modified (phosphoserine; by GRK5).

It belongs to the arrestin family. Monomer. Homodimer. Homooligomer; the self-association is mediated by InsP6-binding. Heterooligomer with ARRB2; the association is mediated by InsP6-binding. Interacts with ADRB2 (phosphorylated). Interacts with CHRM2 (phosphorylated). Interacts with LHCGR. Interacts with CYTH2 and CASR. Interacts with AP2B1 (dephosphorylated); phosphorylation of AP2B1 disrupts the interaction. Interacts (dephosphorylated at Ser-404) with CLTC. Interacts with CCR2 and GRK2. Interacts with CRR5. Interacts with PTAFR (phosphorylated on serine residues). Interacts with CLTC and MAP2K3. Interacts with CREB1. Interacts with TRAF6. Interacts with IGF1R and MDM2. Interacts with C5AR1. Interacts with PDE4D. Interacts with SRC (via the SH3 domain and the protein kinase domain); the interaction is independent of the phosphorylation state of SRC C-terminus. Interacts with TACR1. Interacts with RAF1. Interacts with CHUK, IKBKB and MAP3K14. Interacts with DVL1; the interaction is enhanced by phosphorylation of DVL1. Interacts with DVL2; the interaction is enhanced by phosphorylation of DVL2. Interacts with IGF1R. Associates with MAP kinase p38. Part of a MAPK signaling complex consisting of TACR1, ARRB1, SRC, MAPK1 (activated) and MAPK3 (activated). Part of a MAPK signaling complex consisting of F2RL1, ARRB1, RAF1, MAPK1 (activated) and MAPK3 (activated). Interacts with GPR143. Interacts with MAP2K4/MKK4. Interacts with HCK and CXCR1 (phosphorylated). Interacts with ACKR3 and ACKR4. Interacts with ARRDC1; the interaction is direct. Interacts with GPR61, GPR62 and GPR135. Post-translationally, constitutively phosphorylated at in the cytoplasm. At the plasma membrane, is rapidly dephosphorylated, a process that is required for clathrin binding and ADRB2 endocytosis but not for ADRB2 binding and desensitization. Once internalized, is rephosphorylated. In terms of processing, the ubiquitination status appears to regulate the formation and trafficking of beta-arrestin-GPCR complexes and signaling. Ubiquitination appears to occur GPCR-specific. Ubiquitinated by MDM2; the ubiquitination is required for rapid internalization of ADRB2. Deubiquitinated by USP33; the deubiquitination leads to a dissociation of the beta-arrestin-GPCR complex. Stimulation of a class A GPCR, such as ADRB2, induces transient ubiquitination and subsequently promotes association with USP33.

The protein localises to the cytoplasm. It localises to the nucleus. Its subcellular location is the cell membrane. It is found in the membrane. The protein resides in the clathrin-coated pit. The protein localises to the cell projection. It localises to the pseudopodium. Its subcellular location is the cytoplasmic vesicle. Its function is as follows. Functions in regulating agonist-mediated G-protein coupled receptor (GPCR) signaling by mediating both receptor desensitization and resensitization processes. During homologous desensitization, beta-arrestins bind to the GPRK-phosphorylated receptor and sterically preclude its coupling to the cognate G-protein; the binding appears to require additional receptor determinants exposed only in the active receptor conformation. The beta-arrestins target many receptors for internalization by acting as endocytic adapters (CLASPs, clathrin-associated sorting proteins) and recruiting the GPRCs to the adapter protein 2 complex 2 (AP-2) in clathrin-coated pits (CCPs). However, the extent of beta-arrestin involvement appears to vary significantly depending on the receptor, agonist and cell type. Internalized arrestin-receptor complexes traffic to intracellular endosomes, where they remain uncoupled from G-proteins. Two different modes of arrestin-mediated internalization occur. Class A receptors, like ADRB2, OPRM1, ENDRA, D1AR and ADRA1B dissociate from beta-arrestin at or near the plasma membrane and undergo rapid recycling. Class B receptors, like AVPR2, AGTR1, NTSR1, TRHR and TACR1 internalize as a complex with arrestin and traffic with it to endosomal vesicles, presumably as desensitized receptors, for extended periods of time. Receptor resensitization then requires that receptor-bound arrestin is removed so that the receptor can be dephosphorylated and returned to the plasma membrane. Involved in internalization of P2RY4 and UTP-stimulated internalization of P2RY2. Involved in phosphorylation-dependent internalization of OPRD1 ands subsequent recycling. Involved in the degradation of cAMP by recruiting cAMP phosphodiesterases to ligand-activated receptors. Beta-arrestins function as multivalent adapter proteins that can switch the GPCR from a G-protein signaling mode that transmits short-lived signals from the plasma membrane via small molecule second messengers and ion channels to a beta-arrestin signaling mode that transmits a distinct set of signals that are initiated as the receptor internalizes and transits the intracellular compartment. Acts as a signaling scaffold for MAPK pathways such as MAPK1/3 (ERK1/2). ERK1/2 activated by the beta-arrestin scaffold is largely excluded from the nucleus and confined to cytoplasmic locations such as endocytic vesicles, also called beta-arrestin signalosomes. Recruits c-Src/SRC to ADRB2 resulting in ERK activation. GPCRs for which the beta-arrestin-mediated signaling relies on both ARRB1 and ARRB2 (codependent regulation) include ADRB2, F2RL1 and PTH1R. For some GPCRs the beta-arrestin-mediated signaling relies on either ARRB1 or ARRB2 and is inhibited by the other respective beta-arrestin form (reciprocal regulation). Inhibits ERK1/2 signaling in AGTR1- and AVPR2-mediated activation (reciprocal regulation). Is required for SP-stimulated endocytosis of NK1R and recruits c-Src/SRC to internalized NK1R resulting in ERK1/2 activation, which is required for the antiapoptotic effects of SP. Is involved in proteinase-activated F2RL1-mediated ERK activity. Acts as a signaling scaffold for the AKT1 pathway. Is involved in alpha-thrombin-stimulated AKT1 signaling. Is involved in IGF1-stimulated AKT1 signaling leading to increased protection from apoptosis. Involved in activation of the p38 MAPK signaling pathway and in actin bundle formation. Involved in F2RL1-mediated cytoskeletal rearrangement and chemotaxis. Involved in AGTR1-mediated stress fiber formation by acting together with GNAQ to activate RHOA. Appears to function as signaling scaffold involved in regulation of MIP-1-beta-stimulated CCR5-dependent chemotaxis. Involved in attenuation of NF-kappa-B-dependent transcription in response to GPCR or cytokine stimulation by interacting with and stabilizing CHUK. May serve as nuclear messenger for GPCRs. Involved in OPRD1-stimulated transcriptional regulation by translocating to CDKN1B and FOS promoter regions and recruiting EP300 resulting in acetylation of histone H4. Involved in regulation of LEF1 transcriptional activity via interaction with DVL1 and/or DVL2 Also involved in regulation of receptors other than GPCRs. Involved in Toll-like receptor and IL-1 receptor signaling through the interaction with TRAF6 which prevents TRAF6 autoubiquitination and oligomerization required for activation of NF-kappa-B and JUN. Involved in IL8-mediated granule release in neutrophils. Binds phosphoinositides. Binds inositolhexakisphosphate (InsP6). Required for atypical chemokine receptor ACKR2-induced RAC1-LIMK1-PAK1-dependent phosphorylation of cofilin (CFL1) and for the up-regulation of ACKR2 from endosomal compartment to cell membrane, increasing its efficiency in chemokine uptake and degradation. Involved in the internalization of the atypical chemokine receptor ACKR3. Negatively regulates the NOTCH signaling pathway by mediating the ubiquitination and degradation of NOTCH1 by ITCH. Participates in the recruitment of the ubiquitin-protein ligase to the receptor. This is Beta-arrestin-1 (ARRB1) from Macaca fascicularis (Crab-eating macaque).